A 62-amino-acid polypeptide reads, in one-letter code: Insect toxin BsIT4 (62 aa).

The region spanning 1 to 62 (DGYIKGNKGC…WLYAATNTCG (62 aa)) is the LCN-type CS-alpha/beta domain. 4 disulfide bridges follow: C10-C61, C14-C35, C21-C42, and C25-C44.

Belongs to the long (4 C-C) scorpion toxin superfamily. Sodium channel inhibitor family. Beta subfamily. Expressed by the venom gland.

Its subcellular location is the secreted. Its function is as follows. Depressant insect beta-toxins cause a transient contraction paralysis followed by a slow flaccid paralysis. They bind voltage-independently at site-4 of sodium channels (Nav) and shift the voltage of activation toward more negative potentials thereby affecting sodium channel activation and promoting spontaneous and repetitive firing. This toxin is active only on insects. This Hottentotta tamulus sindicus (Scorpion) protein is Insect toxin BsIT4.